Reading from the N-terminus, the 469-residue chain is Phosphoenolpyruvate carboxylase (469 aa).

It belongs to the PEPCase type 2 family. Homotetramer. Mg(2+) is required as a cofactor.

It catalyses the reaction oxaloacetate + phosphate = phosphoenolpyruvate + hydrogencarbonate. Catalyzes the irreversible beta-carboxylation of phosphoenolpyruvate (PEP) to form oxaloacetate (OAA), a four-carbon dicarboxylic acid source for the tricarboxylic acid cycle. This chain is Phosphoenolpyruvate carboxylase, found in Pyrococcus abyssi (strain GE5 / Orsay).